Reading from the N-terminus, the 208-residue chain is MSLPEPLRRRLGSFSRTVFTDSRRAGPQYPSERADNEILSSLPLQMSLYFNVYFFPFWWLSTVFMLQLKYPVLSDYYKFILVTVMILTSLIEVIRLYLGYMGNLQEKVPELAGFWLLTLLLQLPVILFLLFNEGLNIQPLERSVNIIFALFLVFQVIAAFVTLKRMVNKLATHFHLNEFDRLEEHPVRHLYGPSKEENVLPMASMGPC.

The next 4 helical transmembrane spans lie at 46-66, 79-99, 111-131, and 143-163; these read MSLYFNVYFFPFWWLSTVFML, FILVTVMILTSLIEVIRLYLG, LAGFWLLTLLLQLPVILFLLF, and SVNIIFALFLVFQVIAAFVTL.

The protein belongs to the TMEM17 family. In terms of assembly, part of the tectonic-like complex (also named B9 complex).

Its subcellular location is the cell projection. It is found in the cilium membrane. Transmembrane component of the tectonic-like complex, a complex localized at the transition zone of primary cilia and acting as a barrier that prevents diffusion of transmembrane proteins between the cilia and plasma membranes. Required for ciliogenesis and sonic hedgehog/SHH signaling. The protein is Transmembrane protein 17 (TMEM17) of Gallus gallus (Chicken).